Reading from the N-terminus, the 21-residue chain is Outer membrane protein P2 (21 aa).

Disulfide bond interactions within and between MOMP molecules and other components form high molecular-weight oligomers.

The protein localises to the cell outer membrane. In terms of biological role, structural rigidity of the outer membrane of elementary bodies and porin forming, permitting diffusion of solutes through the intracellular reticulate body membrane. Binds carcinoembryonic antigen (CEA). The sequence is that of Outer membrane protein P2 from Glaesserella parasuis (Haemophilus parasuis).